We begin with the raw amino-acid sequence, 277 residues long: Undecaprenyl-diphosphatase (277 aa).

7 helical membrane passes run 1–21, 41–61, 90–110, 114–134, 191–211, 224–244, and 255–275; these read MTWIEAIILGLVQGLTEFLPI, GAAFTAITQLGTELAVLIYFW, WLIIVGSIPIAVLGLLLEDWI, FRSLWITATMLIVFGVLLALA, AFLLAVPAVFASGLYKLYTSL, ETLVATAVAFVVAYAVIAWLM, and FVWYRILLGGVLFALLGAGVI.

This sequence belongs to the UppP family.

The protein resides in the cell membrane. It carries out the reaction di-trans,octa-cis-undecaprenyl diphosphate + H2O = di-trans,octa-cis-undecaprenyl phosphate + phosphate + H(+). In terms of biological role, catalyzes the dephosphorylation of undecaprenyl diphosphate (UPP). Confers resistance to bacitracin. This chain is Undecaprenyl-diphosphatase, found in Micrococcus luteus (strain ATCC 4698 / DSM 20030 / JCM 1464 / CCM 169 / CCUG 5858 / IAM 1056 / NBRC 3333 / NCIMB 9278 / NCTC 2665 / VKM Ac-2230) (Micrococcus lysodeikticus).